A 309-amino-acid chain; its full sequence is RING finger protein mug145 (309 aa).

The chain crosses the membrane as a helical span at residues 23–43; sequence ILLFALVIILSVIFINFFFFY. The segment at 205–247 adopts an RING-type; atypical zinc-finger fold; it reads CIICYADYAFDDILRVLPCEHVFHTQCIDTWMTTMKASCPLCN.

It is found in the membrane. Its function is as follows. Has a role in meiosis. The chain is RING finger protein mug145 (mug145) from Schizosaccharomyces pombe (strain 972 / ATCC 24843) (Fission yeast).